The primary structure comprises 181 residues: dTTP/UTP pyrophosphatase (181 aa).

Residue Asp-67 is the Proton acceptor of the active site.

This sequence belongs to the Maf family. YhdE subfamily. It depends on a divalent metal cation as a cofactor.

Its subcellular location is the cytoplasm. The catalysed reaction is dTTP + H2O = dTMP + diphosphate + H(+). The enzyme catalyses UTP + H2O = UMP + diphosphate + H(+). Its function is as follows. Nucleoside triphosphate pyrophosphatase that hydrolyzes dTTP and UTP. May have a dual role in cell division arrest and in preventing the incorporation of modified nucleotides into cellular nucleic acids. This is dTTP/UTP pyrophosphatase from Latilactobacillus sakei subsp. sakei (strain 23K) (Lactobacillus sakei subsp. sakei).